The primary structure comprises 106 residues: Large ribosomal subunit protein uL24 (106 aa).

It belongs to the universal ribosomal protein uL24 family. In terms of assembly, part of the 50S ribosomal subunit.

In terms of biological role, one of two assembly initiator proteins, it binds directly to the 5'-end of the 23S rRNA, where it nucleates assembly of the 50S subunit. Functionally, one of the proteins that surrounds the polypeptide exit tunnel on the outside of the subunit. In Acidovorax sp. (strain JS42), this protein is Large ribosomal subunit protein uL24.